Reading from the N-terminus, the 200-residue chain is Peptidyl-tRNA hydrolase (200 aa).

Residue Y17 coordinates tRNA. H22 serves as the catalytic Proton acceptor. 3 residues coordinate tRNA: Y78, N80, and N126.

This sequence belongs to the PTH family. In terms of assembly, monomer.

The protein localises to the cytoplasm. It carries out the reaction an N-acyl-L-alpha-aminoacyl-tRNA + H2O = an N-acyl-L-amino acid + a tRNA + H(+). Its function is as follows. Hydrolyzes ribosome-free peptidyl-tRNAs (with 1 or more amino acids incorporated), which drop off the ribosome during protein synthesis, or as a result of ribosome stalling. Functionally, catalyzes the release of premature peptidyl moieties from peptidyl-tRNA molecules trapped in stalled 50S ribosomal subunits, and thus maintains levels of free tRNAs and 50S ribosomes. This is Peptidyl-tRNA hydrolase from Cutibacterium acnes (strain DSM 16379 / KPA171202) (Propionibacterium acnes).